The primary structure comprises 779 residues: Protocadherin beta-8 (779 aa).

The N-terminal stretch at Met1 to Ser28 is a signal peptide. Over Glu29–Leu690 the chain is Extracellular. 5 consecutive Cadherin domains span residues Leu75–Phe133, Pro134–Phe242, Leu243–Leu346, Thr347–Phe450, and Thr451–Val560. Cys96 and Cys102 form a disulfide bridge. Asn169 carries N-linked (GlcNAc...) asparagine glycosylation. Ser223 carries an O-linked (Man) serine glycan. 2 O-linked (Man) threonine glycosylation sites follow: Thr225 and Thr227. The N-linked (GlcNAc...) asparagine glycan is linked to Asn417. N-linked (GlcNAc...) asparagine glycosylation is present at Asn566. The 101-residue stretch at Leu575–Val675 folds into the Cadherin 6 domain. The chain crosses the membrane as a helical span at residues Val691–Val711. The Cytoplasmic portion of the chain corresponds to Lys712–Ser779.

As to quaternary structure, forms homodimers in trans (molecules expressed by two different cells). Forms promiscuous heterodimers in cis (at the plasma membrane of the same cell) with other protocadherins.

It is found in the cell membrane. Calcium-dependent cell-adhesion protein involved in cells self-recognition and non-self discrimination. Thereby, it is involved in the establishment and maintenance of specific neuronal connections in the brain. This Mus musculus (Mouse) protein is Protocadherin beta-8.